We begin with the raw amino-acid sequence, 241 residues long: 1-(5-phosphoribosyl)-5-[(5-phosphoribosylamino)methylideneamino] imidazole-4-carboxamide isomerase (241 aa).

The active-site Proton acceptor is the aspartate 8. Aspartate 129 acts as the Proton donor in catalysis.

Belongs to the HisA/HisF family.

Its subcellular location is the cytoplasm. It carries out the reaction 1-(5-phospho-beta-D-ribosyl)-5-[(5-phospho-beta-D-ribosylamino)methylideneamino]imidazole-4-carboxamide = 5-[(5-phospho-1-deoxy-D-ribulos-1-ylimino)methylamino]-1-(5-phospho-beta-D-ribosyl)imidazole-4-carboxamide. The protein operates within amino-acid biosynthesis; L-histidine biosynthesis; L-histidine from 5-phospho-alpha-D-ribose 1-diphosphate: step 4/9. This is 1-(5-phosphoribosyl)-5-[(5-phosphoribosylamino)methylideneamino] imidazole-4-carboxamide isomerase from Novosphingobium aromaticivorans (strain ATCC 700278 / DSM 12444 / CCUG 56034 / CIP 105152 / NBRC 16084 / F199).